A 592-amino-acid chain; its full sequence is MDVRSLPSNGVATIQDSAPTAATILGSSAATLGRHLSRRLVQAGVTDIFTVPGDFNLSLLDQLIANPELNNIGCCNELNAGYAADGYARSRGVGACVVTFTVGGLSVLNAIAGAYSENLPVICIVGGPNSNDFGTNRILHHTIGLPDFSQELRCFQTVTCYQAVVNHLEDAHEQIDKAIATALRESKPVYISISCNLAAIPHPTFASYPVPFDLTPRLSNKDCLEAAVEATLEFLNKAVKPVMVGGPKLRVAKARDAFVELADASGYPVAVMPSAKGFVPENHPHFIGTYWGAVSTLFCSEIVESADAYIFAGPIFNDYSSVGYSLLLKKEKAIIVHPDSVVVANGPTFGCVRMSEFFRELAKRVKPNKTAYENYHRIFVPEGKPLKCKPREPLRINAMFQHIQKMLSNETAVIAETGDSWFNCQKLKLPKGCGYEFQMQYGSIGWSVGATLGYAQATPEKRVLSFIGDGSFQVTAQDVSTMIRNGQKTIIFLINNGGYTIEVEIHDGPYNVIKNWNYTGLVDAIHNGEGKCWTTKVRYEEELVEAINTATLEKKDSLCFIEVIVHKDDTSKELLEWGSRVSAANGRPPNPQ.

Substrate-binding residues include aspartate 54 and histidine 141. The thiamine pyrophosphate binding stretch occupies residues 419–501 (DSWFNCQKLK…FLINNGGYTI (83 aa)). Positions 469, 496, and 498 each coordinate Mg(2+). Glutamate 502 provides a ligand contact to substrate.

It belongs to the TPP enzyme family. Homotetramer. It depends on a metal cation as a cofactor. Thiamine diphosphate is required as a cofactor. In terms of tissue distribution, expressed at low levels in roots and shoots.

It catalyses the reaction a 2-oxocarboxylate + H(+) = an aldehyde + CO2. The polypeptide is Pyruvate decarboxylase 3 (PDC3) (Arabidopsis thaliana (Mouse-ear cress)).